A 227-amino-acid polypeptide reads, in one-letter code: ATP synthase F(0) complex subunit a (227 aa).

Helical transmembrane passes span 12–32, 69–89, 98–118, 132–152, 180–200, and 202–222; these read PTYL…ILFP, WAVL…LGLL, QLSL…IIGM, EGTP…SLFI, FVLM…LFLL, and LLEI…LSLY.

The protein belongs to the ATPase A chain family. In terms of assembly, component of the ATP synthase complex composed at least of ATP5F1A/subunit alpha, ATP5F1B/subunit beta, ATP5MC1/subunit c (homooctomer), MT-ATP6/subunit a, MT-ATP8/subunit 8, ATP5ME/subunit e, ATP5MF/subunit f, ATP5MG/subunit g, ATP5MK/subunit k, ATP5MJ/subunit j, ATP5F1C/subunit gamma, ATP5F1D/subunit delta, ATP5F1E/subunit epsilon, ATP5PF/subunit F6, ATP5PB/subunit b, ATP5PD/subunit d, ATP5PO/subunit OSCP. ATP synthase complex consists of a soluble F(1) head domain (subunits alpha(3) and beta(3)) - the catalytic core - and a membrane F(0) domain - the membrane proton channel (subunits c, a, 8, e, f, g, k and j). These two domains are linked by a central stalk (subunits gamma, delta, and epsilon) rotating inside the F1 region and a stationary peripheral stalk (subunits F6, b, d, and OSCP). Interacts with DNAJC30; interaction is direct.

Its subcellular location is the mitochondrion inner membrane. The catalysed reaction is H(+)(in) = H(+)(out). Functionally, subunit a, of the mitochondrial membrane ATP synthase complex (F(1)F(0) ATP synthase or Complex V) that produces ATP from ADP in the presence of a proton gradient across the membrane which is generated by electron transport complexes of the respiratory chain. ATP synthase complex consist of a soluble F(1) head domain - the catalytic core - and a membrane F(1) domain - the membrane proton channel. These two domains are linked by a central stalk rotating inside the F(1) region and a stationary peripheral stalk. During catalysis, ATP synthesis in the catalytic domain of F(1) is coupled via a rotary mechanism of the central stalk subunits to proton translocation. With the subunit c (ATP5MC1), forms the proton-conducting channel in the F(0) domain, that contains two crucial half-channels (inlet and outlet) that facilitate proton movement from the mitochondrial intermembrane space (IMS) into the matrix. Protons are taken up via the inlet half-channel and released through the outlet half-channel, following a Grotthuss mechanism. This is ATP synthase F(0) complex subunit a from Salmo salar (Atlantic salmon).